A 239-amino-acid polypeptide reads, in one-letter code: Norbelladine 4'-O-methyltransferase 2 (239 aa).

Residues valine 55, glutamate 77, 79–80, serine 85, aspartate 103, and alanine 132 each bind S-adenosyl-L-methionine; that span reads GV. A divalent metal cation is bound at residue aspartate 155. Aspartate 157 provides a ligand contact to S-adenosyl-L-methionine. Residues aspartate 181 and asparagine 182 each coordinate a divalent metal cation.

It belongs to the class I-like SAM-binding methyltransferase superfamily. Cation-dependent O-methyltransferase family. Requires Mg(2+) as cofactor.

It carries out the reaction norbelladine + S-adenosyl-L-methionine = 4'-O-methylnorbelladine + S-adenosyl-L-homocysteine + H(+). It participates in alkaloid biosynthesis. Its function is as follows. 4'-O-methyltransferase converting norbelladine to 4'-O-methylnorbelladine. 4'-O-methylnorbelladine is a precursor to all Amaryllidaceae alkaloids such as galanthamine, lycorine and haemanthamine, and including haemanthamine- and crinamine-type alkaloids, promising anticancer agents. The sequence is that of Norbelladine 4'-O-methyltransferase 2 from Narcissus aff. pseudonarcissus MK-2014 (Daffodil).